We begin with the raw amino-acid sequence, 77 residues long: RNA-binding protein Hfq (77 aa).

The 61-residue stretch at 10-70 (DAFLNHVRKT…ISTVMPAQPI (61 aa)) folds into the Sm domain.

It belongs to the Hfq family. As to quaternary structure, homohexamer.

Its function is as follows. RNA chaperone that binds small regulatory RNA (sRNAs) and mRNAs to facilitate mRNA translational regulation in response to envelope stress, environmental stress and changes in metabolite concentrations. Also binds with high specificity to tRNAs. The polypeptide is RNA-binding protein Hfq (Jannaschia sp. (strain CCS1)).